The sequence spans 202 residues: Orotate phosphoribosyltransferase (202 aa).

113 to 121 (EDIITTGGS) provides a ligand contact to 5-phospho-alpha-D-ribose 1-diphosphate. Orotate is bound by residues Thr-117 and Arg-145.

The protein belongs to the purine/pyrimidine phosphoribosyltransferase family. PyrE subfamily. Homodimer. Mg(2+) serves as cofactor.

The catalysed reaction is orotidine 5'-phosphate + diphosphate = orotate + 5-phospho-alpha-D-ribose 1-diphosphate. The protein operates within pyrimidine metabolism; UMP biosynthesis via de novo pathway; UMP from orotate: step 1/2. Functionally, catalyzes the transfer of a ribosyl phosphate group from 5-phosphoribose 1-diphosphate to orotate, leading to the formation of orotidine monophosphate (OMP). In Sulfurimonas denitrificans (strain ATCC 33889 / DSM 1251) (Thiomicrospira denitrificans (strain ATCC 33889 / DSM 1251)), this protein is Orotate phosphoribosyltransferase.